The sequence spans 128 residues: Fluoride-specific ion channel FluC (128 aa).

4 helical membrane passes run 5–25, 35–55, 67–87, and 96–116; these read IVAI…LSIG, LGTL…VVAF, LFVI…SVEV, and FGWA…LTGL. Na(+) is bound by residues Gly75 and Thr78.

It belongs to the fluoride channel Fluc/FEX (TC 1.A.43) family.

It is found in the cell inner membrane. It catalyses the reaction fluoride(in) = fluoride(out). With respect to regulation, na(+) is not transported, but it plays an essential structural role and its presence is essential for fluoride channel function. Functionally, fluoride-specific ion channel. Important for reducing fluoride concentration in the cell, thus reducing its toxicity. The chain is Fluoride-specific ion channel FluC from Burkholderia pseudomallei (strain 1106a).